Consider the following 444-residue polypeptide: Phosphoglucosamine mutase (444 aa).

The Phosphoserine intermediate role is filled by serine 102. Mg(2+) contacts are provided by serine 102, aspartate 241, aspartate 243, and aspartate 245. Position 102 is a phosphoserine (serine 102).

It belongs to the phosphohexose mutase family. Requires Mg(2+) as cofactor. Activated by phosphorylation.

It catalyses the reaction alpha-D-glucosamine 1-phosphate = D-glucosamine 6-phosphate. Its function is as follows. Catalyzes the conversion of glucosamine-6-phosphate to glucosamine-1-phosphate. This chain is Phosphoglucosamine mutase, found in Mannheimia succiniciproducens (strain KCTC 0769BP / MBEL55E).